Reading from the N-terminus, the 1023-residue chain is Exportin-T (1023 aa).

The protein belongs to the exportin family.

It is found in the nucleus. The protein localises to the cytoplasm. TRNA nucleus export receptor which facilitates tRNA translocation across the nuclear pore complex. Involved in pre-tRNA splicing, probably by affecting the interaction of pre-tRNA with splicing endonuclease. The protein is Exportin-T (los1) of Sclerotinia sclerotiorum (strain ATCC 18683 / 1980 / Ss-1) (White mold).